The primary structure comprises 77 residues: Large ribosomal subunit protein bL28 (77 aa).

Belongs to the bacterial ribosomal protein bL28 family.

The sequence is that of Large ribosomal subunit protein bL28 from Karelsulcia muelleri (strain GWSS) (Sulcia muelleri).